Consider the following 440-residue polypeptide: UDP-N-acetylmuramoylalanine--D-glutamate ligase (440 aa).

An ATP-binding site is contributed by 113 to 119 (GTNGKST).

The protein belongs to the MurCDEF family.

The protein resides in the cytoplasm. It catalyses the reaction UDP-N-acetyl-alpha-D-muramoyl-L-alanine + D-glutamate + ATP = UDP-N-acetyl-alpha-D-muramoyl-L-alanyl-D-glutamate + ADP + phosphate + H(+). It participates in cell wall biogenesis; peptidoglycan biosynthesis. Cell wall formation. Catalyzes the addition of glutamate to the nucleotide precursor UDP-N-acetylmuramoyl-L-alanine (UMA). The chain is UDP-N-acetylmuramoylalanine--D-glutamate ligase from Buchnera aphidicola subsp. Acyrthosiphon pisum (strain Tuc7).